The sequence spans 271 residues: Insulin-like growth factor-binding protein 5 (271 aa).

A signal peptide spans 1-19; sequence MVISVVLLLLAAYAVPAQG. Positions 22 to 102 constitute an IGFBP N-terminal domain; it reads SFVHCEPCDE…LHGRGVCLNE (81 aa). 6 disulfide bridges follow: C26–C52, C29–C54, C37–C55, C44–C58, C66–C79, and C73–C99. Positions 109–121 are enriched in basic and acidic residues; that stretch reads TKIERDSREHEEP. The interval 109-129 is disordered; it reads TKIERDSREHEEPTTSEMAEE. At S115 the chain carries Phosphoserine. A Thyroglobulin type-1 domain is found at 188-262; it reads QGPCRRHMEA…MEYVDGDFQC (75 aa). Cystine bridges form between C191–C218, C229–C240, and C242–C262.

As to quaternary structure, interacts with IGF1; this interaction enhances the growth stimulatory effects of IGF1 on fibroblasts. Interacts with CAV1; this interaction allows trafficking of IGFBP5 from the plasma membrane to the nucleus. Interacts with NCL; this interaction is necessary for IGFBP5 localization to the nucleus. As to expression, most abundant in kidney, uterus and gastrocnemius muscle.

Its subcellular location is the secreted. The protein localises to the cytoplasm. It is found in the nucleus. Multifunctional protein that plays a critical role in regulating the availability of IGFs to their receptors and thereby regulates IGF-mediated cellular processes including proliferation, differentiation, and apoptosis in a cell-type specific manner. Increases the cell proliferation of osteoblasts, intestinal smooth muscle cells and neuroblastoma cells. Enhances adhesion and survival of epithelial cells but decreases adhesion of mesenchymal cells. Once secreted, acts as a major mediator of mTORC1-dependent feedback inhibition of IGF1 signaling. Also plays a role in the induction of extracellular matrix (ECM) production and deposition independently of its nuclear translocation and binding to IGFs. Acts itself as a growth factor that can act independently of IGFs to regulate bone formation. Acts as a ligand for the ROR1 receptor which triggers formation of ROR1/HER2 heterodimer to enhance CREB oncogenic signaling. This chain is Insulin-like growth factor-binding protein 5 (Igfbp5), found in Mus musculus (Mouse).